We begin with the raw amino-acid sequence, 171 residues long: S-ribosylhomocysteine lyase (171 aa).

Residues H54, H58, and C128 each contribute to the Fe cation site.

The protein belongs to the LuxS family. Homodimer. The cofactor is Fe cation.

It carries out the reaction S-(5-deoxy-D-ribos-5-yl)-L-homocysteine = (S)-4,5-dihydroxypentane-2,3-dione + L-homocysteine. In terms of biological role, involved in the synthesis of autoinducer 2 (AI-2) which is secreted by bacteria and is used to communicate both the cell density and the metabolic potential of the environment. The regulation of gene expression in response to changes in cell density is called quorum sensing. Catalyzes the transformation of S-ribosylhomocysteine (RHC) to homocysteine (HC) and 4,5-dihydroxy-2,3-pentadione (DPD). In Salmonella typhi, this protein is S-ribosylhomocysteine lyase.